The following is a 317-amino-acid chain: Beta-ketoacyl-[acyl-carrier-protein] synthase III (317 aa).

Catalysis depends on residues cysteine 112 and histidine 244. The tract at residues 245–249 is ACP-binding; sequence QANLR. Asparagine 274 is an active-site residue.

This sequence belongs to the thiolase-like superfamily. FabH family. As to quaternary structure, homodimer.

Its subcellular location is the cytoplasm. It catalyses the reaction malonyl-[ACP] + acetyl-CoA + H(+) = 3-oxobutanoyl-[ACP] + CO2 + CoA. Its pathway is lipid metabolism; fatty acid biosynthesis. Its function is as follows. Catalyzes the condensation reaction of fatty acid synthesis by the addition to an acyl acceptor of two carbons from malonyl-ACP. Catalyzes the first condensation reaction which initiates fatty acid synthesis and may therefore play a role in governing the total rate of fatty acid production. Possesses both acetoacetyl-ACP synthase and acetyl transacylase activities. Its substrate specificity determines the biosynthesis of branched-chain and/or straight-chain of fatty acids. The polypeptide is Beta-ketoacyl-[acyl-carrier-protein] synthase III (Salmonella typhi).